Reading from the N-terminus, the 466-residue chain is FBD-associated F-box protein At5g22730 (466 aa).

The F-box domain occupies 27 to 80 (EDLISKLPDSLITQILLYLPIKDIVRTSSLSSRWKSLWLLIPRLDLDSEEFQDY). The 52-residue stretch at 385–436 (DEPIIFSSVPRCLVSSLESVEIKKFNGRPAKMEVARYFLENSGVLQKLVLHL) folds into the FBD domain.

The protein is FBD-associated F-box protein At5g22730 of Arabidopsis thaliana (Mouse-ear cress).